The chain runs to 781 residues: Isoquinoline 1-oxidoreductase subunit beta (781 aa).

In terms of assembly, heterodimer of an alpha chain and a beta chain.

The catalysed reaction is isoquinoline + A + H2O = isoquinolin-1(2H)-one + AH2. Functionally, specific towards N-containing N-heterocyclic substrates, including isoquinoline, isoquinolin-5-ol, phthalazine and quinazoline. The polypeptide is Isoquinoline 1-oxidoreductase subunit beta (iorB) (Brevundimonas diminuta (Pseudomonas diminuta)).